The following is a 108-amino-acid chain: V-type proton ATPase subunit G (108 aa).

Over residues 48–60 (YASKKEEEFKKSE) the composition is skewed to basic and acidic residues. Residues 48–89 (YASKKEEEFKKSESQASGIYSQAEAESKKQVQDTFASIETSS) form a disordered region. The span at 79–89 (QDTFASIETSS) shows a compositional bias: polar residues.

This sequence belongs to the V-ATPase G subunit family. As to quaternary structure, V-ATPase is a heteromultimeric enzyme composed of a peripheral catalytic V1 complex (components A to H) attached to an integral membrane V0 proton pore complex (components: a, c, c', c'', d, e, f and VOA1).

The protein resides in the vacuole membrane. Functionally, subunit of the V1 complex of vacuolar(H+)-ATPase (V-ATPase), a multisubunit enzyme composed of a peripheral complex (V1) that hydrolyzes ATP and a membrane integral complex (V0) that translocates protons. V-ATPase is responsible for acidifying and maintaining the pH of intracellular compartments. In Schizosaccharomyces pombe (strain 972 / ATCC 24843) (Fission yeast), this protein is V-type proton ATPase subunit G (vma10).